The primary structure comprises 221 residues: Ktr system potassium uptake protein C (221 aa).

Residues 2–118 form the RCK N-terminal domain; the sequence is KKEFAVIGLG…LSKIGADHIV (117 aa). Residues arginine 12, 32–34, 52–53, 74–76, 99–101, histidine 105, and glutamate 121 each bind NAD(+); these read DID, DS, IGE, and KAQ. The RCK C-terminal domain maps to 135–219; that stretch reads NNVLDYLELS…ISRFEKRVLH (85 aa).

The protein belongs to the KtrA potassium transport family. In terms of assembly, homodimer, tetramer (dimer of homodimer) and octamer (tetramer of homodimer). Part of the KtrCD complex formed by an octameric catalytic ring of KtrC and a membrane associated dimer of KtrD forming a potassium channel.

It localises to the cell membrane. In terms of biological role, catalytic subunit of the KtrCD potassium uptake transporter. The 2 major potassium transporter complexes KtrAB and KtrCD confer resistance to both suddenly imposed and prolonged osmotic stress. The protein is Ktr system potassium uptake protein C (ktrC) of Bacillus subtilis (strain 168).